Here is a 249-residue protein sequence, read N- to C-terminus: 23S rRNA (guanosine-2'-O-)-methyltransferase RlmB (249 aa).

Residues Gly-200, Ile-220, and Leu-229 each contribute to the S-adenosyl-L-methionine site.

The protein belongs to the class IV-like SAM-binding methyltransferase superfamily. RNA methyltransferase TrmH family. RlmB subfamily.

It is found in the cytoplasm. The catalysed reaction is guanosine(2251) in 23S rRNA + S-adenosyl-L-methionine = 2'-O-methylguanosine(2251) in 23S rRNA + S-adenosyl-L-homocysteine + H(+). In terms of biological role, specifically methylates the ribose of guanosine 2251 in 23S rRNA. The protein is 23S rRNA (guanosine-2'-O-)-methyltransferase RlmB of Xylella fastidiosa (strain Temecula1 / ATCC 700964).